A 212-amino-acid polypeptide reads, in one-letter code: Regulator of G-protein signaling 2 (212 aa).

Disordered stretches follow at residues 11–33 (HDCGPMDKSAGTGPKSEEKREKM) and 48–69 (FLQNSSSPGKPKTGKKSKPQTF). Residues 32–66 (KMKRTLLKDWKTRLSYFLQNSSSPGKPKTGKKSKP) form a necessary for membrane association region. Residues 79-116 (LWAEAFDELLASKYGLAAFRAFLKSEFCEENIEFWLAC) are necessary to inhibit protein synthesis. Residues 83–199 (AFDELLASKY…LESEFYQDLC (117 aa)) enclose the RGS domain.

Interacts with GNAQ. Does not interact with GNAI1 and GNAI3. Interacts with EIF2B5. Interacts with PRKG1 (isoform alpha). In terms of processing, phosphorylated by protein kinase C. Phosphorylation by PRKG1 leads to activation of RGS2 activity.

It is found in the cell membrane. Its subcellular location is the cytoplasm. It localises to the nucleus. The protein localises to the nucleolus. Regulates G protein-coupled receptor signaling cascades. Inhibits signal transduction by increasing the GTPase activity of G protein alpha subunits, thereby driving them into their inactive GDP-bound form. It is involved in the negative regulation of the angiotensin-activated signaling pathway. Plays a role in the regulation of blood pressure in response to signaling via G protein-coupled receptors and GNAQ. Plays a role in regulating the constriction and relaxation of vascular smooth muscle. Binds EIF2B5 and blocks its activity, thereby inhibiting the translation of mRNA into protein. The sequence is that of Regulator of G-protein signaling 2 (RGS2) from Sus scrofa (Pig).